Here is a 145-residue protein sequence, read N- to C-terminus: Antiholin-like protein LrgA (145 aa).

The next 4 membrane-spanning stretches (helical) occupy residues 10–30 (PAHF…SKII), 33–53 (FMPI…VLLC), 72–92 (NIGL…GVIS), and 96–116 (FLII…TGYV).

This sequence belongs to the CidA/LrgA family. LrgA subfamily.

The protein resides in the cell membrane. Functionally, inhibits the expression or activity of extracellular murein hydrolases by interacting, possibly with LrgB, with the holin-like proteins CidA and/or CidB. The LrgAB and CidAB proteins may affect the proton motive force of the membrane. May be involved in programmed cell death (PCD), possibly triggering PCD in response to antibiotics and environmental stresses. The polypeptide is Antiholin-like protein LrgA (Staphylococcus aureus (strain JH1)).